The sequence spans 108 residues: UPF0145 protein THA_1434 (108 aa).

The protein belongs to the UPF0145 family.

The chain is UPF0145 protein THA_1434 from Thermosipho africanus (strain TCF52B).